A 170-amino-acid polypeptide reads, in one-letter code: Translationally-controlled tumor protein homolog (170 aa).

In terms of domain architecture, TCTP spans 1–170 (MLIYSDIITG…WKHGLKETKV (170 aa)).

Belongs to the TCTP family.

It is found in the cytoplasm. It localises to the cytoskeleton. In terms of biological role, involved in protein synthesis. Involved in microtubule stabilization. In Neurospora crassa (strain ATCC 24698 / 74-OR23-1A / CBS 708.71 / DSM 1257 / FGSC 987), this protein is Translationally-controlled tumor protein homolog.